The primary structure comprises 336 residues: Dihydroorotate dehydrogenase (quinone) (336 aa).

Residues 62–66 (AGLDK) and T86 each bind FMN. K66 serves as a coordination point for substrate. Position 111 to 115 (111 to 115 (NRMGF)) interacts with substrate. Positions 139 and 172 each coordinate FMN. Residue N172 participates in substrate binding. The Nucleophile role is filled by S175. N177 is a substrate binding site. FMN contacts are provided by K217 and T245. Position 246–247 (246–247 (NT)) interacts with substrate. FMN contacts are provided by residues G268, G297, and 318–319 (YS).

This sequence belongs to the dihydroorotate dehydrogenase family. Type 2 subfamily. Monomer. FMN is required as a cofactor.

It localises to the cell membrane. The enzyme catalyses (S)-dihydroorotate + a quinone = orotate + a quinol. It functions in the pathway pyrimidine metabolism; UMP biosynthesis via de novo pathway; orotate from (S)-dihydroorotate (quinone route): step 1/1. Its function is as follows. Catalyzes the conversion of dihydroorotate to orotate with quinone as electron acceptor. In Salmonella agona (strain SL483), this protein is Dihydroorotate dehydrogenase (quinone).